The sequence spans 78 residues: Large ribosomal subunit protein bL28 (78 aa).

The protein belongs to the bacterial ribosomal protein bL28 family.

This Edwardsiella ictaluri (strain 93-146) protein is Large ribosomal subunit protein bL28.